The sequence spans 843 residues: Eisosome protein 1 (843 aa).

The disordered stretch occupies residues 1 to 53; that stretch reads MSLISAVEDRDIHNIGKTSGGGSRTSSITSSKKSLKHGSKSLRKPKVYQTTGE. N-acetylserine is present on S2. S2 bears the Phosphoserine mark. The segment covering 33–46 has biased composition (basic residues); it reads KSLKHGSKSLRKPK. Phosphoserine occurs at positions 88 and 130. Positions 120–174 are disordered; the sequence is KMGPKVVRNNSITSATSKTSKESQTKRKSKESPGAAASKAYSMTMETTSLSSQTN. Composition is skewed to polar residues over residues 127 to 137 and 163 to 174; these read RNNSITSATSK and TMETTSLSSQTN. 4 positions are modified to phosphoserine: S182, S401, S584, and S710. Positions 717-843 are disordered; that stretch reads DLPTQLEKIE…QDAISNQEKK (127 aa). T720 bears the Phosphothreonine mark. The span at 752–764 shows a compositional bias: low complexity; it reads STAAKEATETSSA. Phosphoserine is present on residues S763 and S775. Basic and acidic residues predominate over residues 781 to 797; it reads SGKEDANDCKSAEHSKE. Residues 798-810 are compositionally biased toward polar residues; it reads ISVSQKAGNNKSL. 4 positions are modified to phosphoserine: S816, S828, S829, and S838.

It belongs to the EIS1 family.

It is found in the cytoplasmic granule. Its subcellular location is the cell membrane. Functionally, required for normal formation of eisosomes, large cytoplasmic protein assemblies that localize to specialized domains on plasma membrane and mark the site of endocytosis. This Saccharomyces cerevisiae (strain ATCC 204508 / S288c) (Baker's yeast) protein is Eisosome protein 1 (EIS1).